A 146-amino-acid polypeptide reads, in one-letter code: Putative transposon Ty5-1 protein YCL075W (146 aa).

This chain is Putative transposon Ty5-1 protein YCL075W (TY5B), found in Saccharomyces cerevisiae (strain ATCC 204508 / S288c) (Baker's yeast).